Consider the following 395-residue polypeptide: Elongation factor Tu (395 aa).

Residues 10-204 form the tr-type G domain; the sequence is KPHVNVGTIG…AVDEYIPEPT (195 aa). The tract at residues 19-26 is G1; the sequence is GHVDHGKT. 19 to 26 lines the GTP pocket; sequence GHVDHGKT. A Mg(2+)-binding site is contributed by T26. Residues 60–64 are G2; it reads GITIA. The interval 81–84 is G3; the sequence is DCPG. Residues 81–85 and 136–139 each bind GTP; these read DCPGH and NKVD. Positions 136 to 139 are G4; that stretch reads NKVD. The interval 174 to 176 is G5; sequence SAL.

This sequence belongs to the TRAFAC class translation factor GTPase superfamily. Classic translation factor GTPase family. EF-Tu/EF-1A subfamily. As to quaternary structure, monomer.

The protein resides in the cytoplasm. It catalyses the reaction GTP + H2O = GDP + phosphate + H(+). GTP hydrolase that promotes the GTP-dependent binding of aminoacyl-tRNA to the A-site of ribosomes during protein biosynthesis. This is Elongation factor Tu from Exiguobacterium sibiricum (strain DSM 17290 / CCUG 55495 / CIP 109462 / JCM 13490 / 255-15).